The primary structure comprises 426 residues: D-tagatose-1,6-bisphosphate aldolase subunit KbaZ (426 aa).

The protein belongs to the GatZ/KbaZ family. KbaZ subfamily. Forms a complex with KbaY.

It participates in carbohydrate metabolism; D-tagatose 6-phosphate degradation; D-glyceraldehyde 3-phosphate and glycerone phosphate from D-tagatose 6-phosphate: step 2/2. Functionally, component of the tagatose-1,6-bisphosphate aldolase KbaYZ that is required for full activity and stability of the Y subunit. Could have a chaperone-like function for the proper and stable folding of KbaY. When expressed alone, KbaZ does not show any aldolase activity. The protein is D-tagatose-1,6-bisphosphate aldolase subunit KbaZ of Escherichia coli O1:K1 / APEC.